The sequence spans 152 residues: Snaclec 5 (152 aa).

The first 23 residues, 1–23 (MGRFIFLSSGLLVVFLSLSGTGA), serve as a signal peptide directing secretion. Intrachain disulfides connect Cys-27–Cys-38, Cys-55–Cys-148, and Cys-123–Cys-140. Positions 34 to 149 (YGQHCYRAFK…CASHNPFVCK (116 aa)) constitute a C-type lectin domain.

Belongs to the snaclec family. In terms of assembly, heterodimer; disulfide-linked. Expressed by the venom gland.

The protein localises to the secreted. In terms of biological role, interferes with one step of hemostasis (modulation of platelet aggregation, or coagulation cascade, for example). In Bitis arietans (African puff adder), this protein is Snaclec 5.